A 226-amino-acid polypeptide reads, in one-letter code: Transmembrane emp24 domain-containing protein 5 (226 aa).

An N-terminal signal peptide occupies residues 1–24 (MGDKTWLPFPVVLLAALLLPRAAG). At 25–193 (FTPSLDSDFT…IQESNFDRVN (169 aa)) the chain is on the lumenal side. The region spanning 42–123 (KECFYQPMPL…EKVIFFELIL (82 aa)) is the GOLD domain. Residues 194–214 (FWSMVNLVVMVVVSAIQVYML) traverse the membrane as a helical segment. Residues 215-226 (KSLFEDKRKSRT) lie on the Cytoplasmic side of the membrane. The Mediates export from ER signature appears at 217-218 (LF).

The protein belongs to the EMP24/GP25L family. As to quaternary structure, interacts with TMED9 and TMED10.

Its subcellular location is the endoplasmic reticulum membrane. The protein localises to the golgi apparatus. The protein resides in the cis-Golgi network membrane. It localises to the endoplasmic reticulum-Golgi intermediate compartment membrane. Potential role in vesicular protein trafficking, mainly in the early secretory pathway. Required for the maintenance of the Golgi apparatus; involved in protein exchange between Golgi stacks during assembly. Probably not required for COPI-vesicle-mediated retrograde transport. The polypeptide is Transmembrane emp24 domain-containing protein 5 (TMED5) (Bos taurus (Bovine)).